A 235-amino-acid chain; its full sequence is MNELVYGLSALGISLNSVQLGQFETYYQELVDYNSRINLTAITEYKDVQIKHFLDSVSLVLAGIKGDEKLLDVGSGAGFPGLPLKILFPAIQLGLLEATQKKARFLSEITVKLGLSGVEIISQRAEDTAQNPLYRQKYSLVTSRAVADMATLAELTLPFCAIGGRVIAPKKGDIEEEMDRAATAVKKMGGRVFKVIKVELPGLEDGRKLVLLEKISNTPALYPRRAGIPAKTPLI.

S-adenosyl-L-methionine contacts are provided by residues G74, F79, 97–99 (EAT), 125–126 (AE), and R144.

This sequence belongs to the methyltransferase superfamily. RNA methyltransferase RsmG family.

Its subcellular location is the cytoplasm. Specifically methylates the N7 position of a guanine in 16S rRNA. The polypeptide is Ribosomal RNA small subunit methyltransferase G (Dehalococcoides mccartyi (strain ATCC BAA-2100 / JCM 16839 / KCTC 5957 / BAV1)).